The following is a 1360-amino-acid chain: Lysine-specific demethylase REF6 (1360 aa).

An N-acetylalanine modification is found at alanine 2. The JmjN domain occupies 20-61 (APEFRPTLAEFQDPIAYILKIEEEASRYGICKILPPLPPPSK). The JmjC domain occupies 203-369 (ETAWNMRAMS…MAKDAAIRRA (167 aa)). Positions 246, 248, and 337 each coordinate Fe cation. Positions 652-698 (YGDSSDSEEEDQKGLVTPSSKGETKTYDQEGSDGHEEARDGRTSDFN) are disordered. The span at 673-694 (GETKTYDQEGSDGHEEARDGRT) shows a compositional bias: basic and acidic residues. Residues 944–951 (CRKRKIRA) carry the Nuclear localization signal motif. Disordered stretches follow at residues 955–1012 (PRKK…DPHK), 1044–1081 (AASE…SQQT), 1133–1155 (TGKR…QSSR), and 1172–1238 (EELD…NEEE). 2 stretches are compositionally biased toward polar residues: residues 994 to 1008 (ETGN…NQMS) and 1046 to 1057 (SESSMENGSQHS). A compositionally biased stretch (basic residues) spans 1136 to 1147 (RQTRSTAKRIAK). Positions 1225 to 1238 (EKEEEEEEEENEEE) are enriched in acidic residues. Residues 1243-1266 (YQCNMEGCTMSFSSEKQLMLHKRN) form a C2H2-type 1; degenerate zinc finger. 16 residues coordinate Zn(2+): cysteine 1245, cysteine 1250, histidine 1263, cysteine 1268, cysteine 1273, histidine 1280, histidine 1286, histidine 1290, cysteine 1298, cysteine 1303, histidine 1316, histidine 1320, cysteine 1328, cysteine 1333, histidine 1346, and histidine 1352. 3 consecutive C2H2-type zinc fingers follow at residues 1266–1290 (NICP…QRVH), 1296–1320 (LKCP…IRVH), and 1326–1352 (YVCA…KTGH). A DNA-binding region spans residues 1275 to 1348 (KNFFSHKYLV…FVSDFSRHKR (74 aa)).

The protein belongs to the JHDM3 histone demethylase family. As to quaternary structure, forms homooligomers. Interacts with BZR2 (via N-terminus). Interacts with BRM in the SWI/SNF complex. Interacts (via N-terminus) with NFYC9. Associates with INO80. As to expression, highly expressed in the shoot apical meristem and primary and secondary root tips, and lower expression in cotyledons, leaves and root axis along vascular tissues. Detected in inflorescences, stems and siliques. Present in seeds.

The protein localises to the nucleus. The enzyme catalyses N(6),N(6),N(6)-trimethyl-L-lysyl(27)-[histone H3] + 2-oxoglutarate + O2 = N(6),N(6)-dimethyl-L-lysyl(27)-[histone H3] + formaldehyde + succinate + CO2. It carries out the reaction N(6),N(6)-dimethyl-L-lysyl(27)-[histone H3] + 2-oxoglutarate + O2 = N(6)-methyl-L-lysyl(27)-[histone H3] + formaldehyde + succinate + CO2. In terms of biological role, histone demethylase that demethylates 'Lys-27' (H3K27me) of histone H3, thus acting as a positive regulator of gene expression. Demethylates both tri- (H3K27me3) and di-methylated (H3K27me2) H3K27me. Also demethylates H3K4me3/2 and H3K36me3/2 in an in vitro assay. Involved in the transcriptional regulation of hundreds of genes regulating developmental patterning and responses to various stimuli. Binds DNA via its four zinc fingers in a sequence-specific manner, 5'-CTCTG(C/T)T(C/T)-3' (5'-CTCTGYTY-3'), with a preference for hypo-methylated status (e.g. cytosine methylation), to promote the demethylation of H3K27me3 and recruit the chromatin remodeler BRM in order to activate gene expression. Participates in the regulation of organ boundary formation. Bind mostly motifs located in active chromatin states which are depleted for heterochromatic modifications. Involved in the regulation of flowering time by repressing FLOWERING LOCUS C (FLC) expression. Stimulates lateral roots formation (e.g. primordium initiation and emergence) via the epigenetic de-repression of PIN genes such as PIN1, PIN3 and PIN7 directly by modulating the methylation status of their loci. Interacts with the NF-Y complex to regulate SOC1. Mediates the recruitment of BRM to its target loci. Together with EEN, involved in the epigenetic chromatin-dependent regulatory mechanism that monitors the expression of the essential multifunctional plant stress regulator EIN2 via H3K27me3 repressive histone demethylation and histone variant H2A.Z eviction, thus modulating responses to ethylene (ET), especially during embryogenesis. Eluviates seed dormancy by triggering abscisic acid (ABA) catabolism in seeds via the induction of CYP707A1 and CYP707A3 expression, genes involved in ABA degradation; binds directly to CYP707A1 and CYP707A3 loci to reduce their H3K27me3 levels in developing siliques. Required for systemic acquired resistance (SAR) toward pathogenic bacteria (e.g. Pseudomonas syringae pv tomato DC3000 (avrPto)). Together with FLD and MSI4/FVE, contributes to dehydroabietinal-dependent (DA, a diterpenoid tricyclic diterpene) activation of flowering ans SAR. Binds to the HSFA2 chromatin region to alleviate H3K27me3 repressive marks and trigger its expression in response to heat in a BRM-dependent manner. Involved in the mechanisms necessary for quick response to heat and subsequent heritable transgenerational memory of heat acclimation (global warming) such as early flowering and attenuated immunity; this process includes epigenetic regulation as well as post-transcriptional gene silencing (PTGS). In response to heat, HSFA2 is activated and promotes the expression of REF6 which in turn derepresses HSFA2, thus establishing a heritable feedback loop able to trigger SGIP1 and subsequent SGIP1-mediated SGS3 degradation; this prevents the biosynthesis of trans-acting siRNA (tasiRNA) and leads to the release of HTT5, which drives early flowering but attenuates immunity. Functionally, involved in the maintenance of H3K27me1 histone marks on euchromatin in a PRC2-dependent manner, to maintain low-level basal expression of corresponding genes. Together with ELF6, required for H3K27me3 resetting (especially in constitutive heterochromatin within the pericentromeric regions) and transgenerational inheritance of histone marks, thus acting in safeguarding genome and epigenome integrity during sexual reproduction. The sequence is that of Lysine-specific demethylase REF6 from Arabidopsis thaliana (Mouse-ear cress).